Reading from the N-terminus, the 307-residue chain is Glutaminase 1 (307 aa).

Residues S62, N114, E159, N166, Y190, Y242, and V260 each coordinate substrate.

Belongs to the glutaminase family. As to quaternary structure, homotetramer.

The catalysed reaction is L-glutamine + H2O = L-glutamate + NH4(+). The chain is Glutaminase 1 from Clostridium perfringens (strain 13 / Type A).